The primary structure comprises 679 residues: F-box/LRR-repeat protein 5 (679 aa).

Positions methionine 1–cysteine 159 are hemerythrin-like. Fe(3+) is bound by residues histidine 15, histidine 57, glutamate 58, glutamate 61, histidine 80, histidine 126, and glutamate 130. In terms of domain architecture, F-box spans arginine 205–leucine 251. 7 LRR repeats span residues glutamate 316 to tyrosine 342, serine 343 to threonine 367, glutamine 368 to glycine 395, cysteine 396 to alanine 426, cysteine 565 to glycine 595, cysteine 596 to glycine 623, and cysteine 624 to tyrosine 649. Cysteine 650, cysteine 664, cysteine 674, and cysteine 675 together coordinate [2Fe-2S] cluster.

As to quaternary structure, part of a SCF (SKP1-cullin-F-box) protein ligase complex. [2Fe-2S] cluster is required as a cofactor. In terms of processing, ubiquitinated upon iron and oxygen depletion, leading to its degradation by the proteasome. Ubiquitination is regulated by the hemerythrin-like region that acts as an oxygen and iron sensor.

It localises to the cytoplasm. It is found in the perinuclear region. The protein resides in the nucleus. Its pathway is protein modification; protein ubiquitination. In terms of biological role, component of some SCF (SKP1-cullin-F-box) protein ligase complex that plays a central role in iron homeostasis by promoting the ubiquitination and subsequent degradation of ireb2/irp2. Upon high iron and oxygen level, it specifically recognizes and binds ireb2/irp2, promoting its ubiquitination and degradation by the proteasome. The polypeptide is F-box/LRR-repeat protein 5 (fbxl5) (Danio rerio (Zebrafish)).